Reading from the N-terminus, the 244-residue chain is tRNA pseudouridine synthase A (244 aa).

Asp-52 serves as the catalytic Nucleophile. Position 110 (Tyr-110) interacts with substrate.

The protein belongs to the tRNA pseudouridine synthase TruA family. In terms of assembly, homodimer.

It catalyses the reaction uridine(38/39/40) in tRNA = pseudouridine(38/39/40) in tRNA. Functionally, formation of pseudouridine at positions 38, 39 and 40 in the anticodon stem and loop of transfer RNAs. This chain is tRNA pseudouridine synthase A, found in Geobacter sulfurreducens (strain ATCC 51573 / DSM 12127 / PCA).